The following is a 286-amino-acid chain: uncharacterized protein (286 aa).

NAD(+) contacts are provided by residues 4–18 (AVIG…IARN) and Thr95. Residue Lys171 is part of the active site. Lys239 contributes to the NAD(+) binding site.

The protein belongs to the HIBADH-related family.

This is an uncharacterized protein from Bacillus subtilis (strain 168).